Here is a 1091-residue protein sequence, read N- to C-terminus: Integrin alpha-6 (1091 aa).

Residues 1–23 (MAVAGQLCLLYLSAGLLARLGTA) form the signal peptide. Over 24–1011 (FNLDTREDNV…FPSKTVAQYS (988 aa)) the chain is Extracellular. FG-GAP repeat units follow at residues 30–95 (EDNV…GPCT), 101–166 (NDAD…IEDD), 176–229 (DGRL…FFDM), 244–300 (DHDE…KSAH), 301–363 (LLPE…KWSN), 364–419 (VKPI…GIIT), and 420–479 (KPTQ…VTPN). An N-linked (GlcNAc...) asparagine glycan is attached at Asn78. 3 cysteine pairs are disulfide-bonded: Cys86–Cys94, Cys131–Cys154, and Cys175–Cys188. Asn223 and Asn284 each carry an N-linked (GlcNAc...) asparagine glycan. Positions 324, 326, 328, and 332 each coordinate Ca(2+). N-linked (GlcNAc...) asparagine glycosylation occurs at Asn370. Positions 386, 388, 390, 392, 394, 441, 443, 445, 447, and 449 each coordinate Ca(2+). 4 disulfides stabilise this stretch: Cys489–Cys496, Cys502–Cys562, Cys626–Cys632, and Cys726–Cys737. Asn731, Asn746, and Asn927 each carry an N-linked (GlcNAc...) asparagine glycan. Intrachain disulfides connect Cys881-Cys928 and Cys934-Cys939. Asn958 is a glycosylation site (N-linked (GlcNAc...) asparagine). Residues 1012-1037 (GVAWWIILLAVLAGILMLALLVFLLW) traverse the membrane as a helical segment. The Cytoplasmic portion of the chain corresponds to 1038–1091 (KCGFFKRSRYDDSIPRYHAVRIRKEEREIKDEKHMDNLEKKQWITKWNENESYS). Cys1039 carries S-palmitoyl cysteine; by DHHC3 lipidation. The GFFKR motif signature appears at 1040–1044 (GFFKR). Arg1064 is modified (phosphoserine).

Belongs to the integrin alpha chain family. In terms of assembly, heterodimer of an alpha and a beta subunit. The alpha subunit is composed of a heavy and a light chain linked by a disulfide bond. Alpha-6 associates with either beta-1 (ITGB1) or beta-4 (ITGB4) to form ITGA6:ITGB1 and ITGA6:ITGB4, respectively. ITGA6:ITGB1 is found in a complex with CD9; interaction takes place in oocytes and is involved in sperm-egg fusion. ITGA6:ITGB4 is found in a ternary complex with NRG1 and ERBB3. ITGA6:ITGB4 is found in a ternary complex with IGF1 and IGF1R. ITGA6:ITGB4 interacts with IGF2. Interacts with ADAM9. Interacts with RAB21. Interacts with MDK. ITGA6:ITGB1 interacts with MDK; this interaction mediates MDK-induced neurite outgrowth. Interacts with CD82; this interaction down-regulates ITGA6-mediated cell adhesion. Isoforms containing segment A, but not segment B, are the major targets for PMA-induced phosphorylation. Phosphorylation occurs on 'Ser-1064' of isoform alpha-6X1A. Phosphorylation is not required for the induction of integrin alpha-6A/beta-1 high affinity but may reduce the affinity for ligand. Post-translationally, undergoes PLAU-mediated cleavage at residues Arg-595-596-Arg in a time-dependent manner to produce processed integrin alpha-6 (alpha6p). In terms of processing, palmitoylation by DHHC3 enhances stability and cell surface expression. As to expression, expressed at low levels in normal skin tissue with elevated levels in skin tumors.

The protein localises to the cell membrane. Functionally, integrin alpha-6/beta-1 (ITGA6:ITGB1) is a receptor for laminin on platelets. Integrin alpha-6/beta-1 (ITGA6:ITGB1) is present in oocytes and is involved in sperm-egg fusion. Integrin alpha-6/beta-4 (ITGA6:ITGB4) is a receptor for laminin in epithelial cells and it plays a critical structural role in the hemidesmosome. ITGA6:ITGB4 binds to NRG1 (via EGF domain) and this binding is essential for NRG1-ERBB signaling. ITGA6:ITGB4 binds to IGF1 and this binding is essential for IGF1 signaling. ITGA6:ITGB4 binds to IGF2 and this binding is essential for IGF2 signaling. The sequence is that of Integrin alpha-6 (Itga6) from Mus musculus (Mouse).